The following is a 298-amino-acid chain: HTH-type transcriptional regulator ArgP (298 aa).

An HTH lysR-type domain is found at 4 to 60 (LDYKWIEALDAVVAQGGFERAAEELYISQSAVSQRIKQLERFLAQSVLIREQPPKPT). Positions 21–40 (FERAAEELYISQSAVSQRIK) form a DNA-binding region, H-T-H motif.

Belongs to the LysR transcriptional regulatory family. In terms of assembly, homodimer.

Controls the transcription of genes involved in arginine and lysine metabolism. The polypeptide is HTH-type transcriptional regulator ArgP (Vibrio vulnificus (strain YJ016)).